Consider the following 376-residue polypeptide: E3 ubiquitin-protein ligase RNF133 (376 aa).

Positions 65–167 (SSTLKRVAGV…LKGTEIFHLI (103 aa)) constitute a PA domain. Residues 190–210 (YLVSFVIVTTATLAYFIFYHI) traverse the membrane as a helical segment. Residues 256–297 (CVICFEHYKPNDIVRILTCKHFFHKNCIDPWILSHGTCPICK) form an RING-type; atypical zinc finger. Residues 328-376 (TLSPSEEETNNEVSPAGTSDKVIHVEENPTSQNNDSQPHSVVEDVHPSP) form a disordered region. Polar residues predominate over residues 355-366 (NPTSQNNDSQPH).

Interacts with E3 ligase UBE2J1. Post-translationally, auto-ubiquitinated.

It localises to the endoplasmic reticulum membrane. It catalyses the reaction S-ubiquitinyl-[E2 ubiquitin-conjugating enzyme]-L-cysteine + [acceptor protein]-L-lysine = [E2 ubiquitin-conjugating enzyme]-L-cysteine + N(6)-ubiquitinyl-[acceptor protein]-L-lysine.. Its pathway is protein modification; protein ubiquitination. Functionally, has E3 ubiquitin-protein ligase activity. Plays a role in male fecundity through the interaction with the E2 ubituitin-protein ligase UBE2J1. The polypeptide is E3 ubiquitin-protein ligase RNF133 (RNF133) (Macaca fascicularis (Crab-eating macaque)).